The sequence spans 203 residues: Pyridoxal 5'-phosphate synthase subunit PdxT (203 aa).

L-glutamine is bound at residue 51–53 (GES). C83 serves as the catalytic Nucleophile. L-glutamine contacts are provided by residues R110 and 137-138 (IR). Catalysis depends on charge relay system residues H172 and E174.

Belongs to the glutaminase PdxT/SNO family. As to quaternary structure, in the presence of PdxS, forms a dodecamer of heterodimers. Only shows activity in the heterodimer.

It catalyses the reaction aldehydo-D-ribose 5-phosphate + D-glyceraldehyde 3-phosphate + L-glutamine = pyridoxal 5'-phosphate + L-glutamate + phosphate + 3 H2O + H(+). The enzyme catalyses L-glutamine + H2O = L-glutamate + NH4(+). Its pathway is cofactor biosynthesis; pyridoxal 5'-phosphate biosynthesis. In terms of biological role, catalyzes the hydrolysis of glutamine to glutamate and ammonia as part of the biosynthesis of pyridoxal 5'-phosphate. The resulting ammonia molecule is channeled to the active site of PdxS. This is Pyridoxal 5'-phosphate synthase subunit PdxT from Thermoplasma acidophilum (strain ATCC 25905 / DSM 1728 / JCM 9062 / NBRC 15155 / AMRC-C165).